A 147-amino-acid polypeptide reads, in one-letter code: Heavy metal-dependent transcription regulator 1 (147 aa).

The 70-residue stretch at 1 to 70 folds into the HTH merR-type domain; the sequence is MNIGQASKVV…VEQIKDLLAL (70 aa). Residues 3 to 22 constitute a DNA-binding region (H-T-H motif); it reads IGQASKVVSGVSSKMIRYYE.

Its subcellular location is the cytoplasm. Functionally, transcriptional regulator involved in acid tolerance. Binds copper. The chain is Heavy metal-dependent transcription regulator 1 (hmrR1) from Rhizobium meliloti (strain 1021) (Ensifer meliloti).